The primary structure comprises 134 residues: ATP synthase epsilon chain (134 aa).

Belongs to the ATPase epsilon chain family. F-type ATPases have 2 components, CF(1) - the catalytic core - and CF(0) - the membrane proton channel. CF(1) has five subunits: alpha(3), beta(3), gamma(1), delta(1), epsilon(1). CF(0) has three main subunits: a, b and c.

The protein localises to the cell membrane. Its function is as follows. Produces ATP from ADP in the presence of a proton gradient across the membrane. The protein is ATP synthase epsilon chain of Alkaliphilus metalliredigens (strain QYMF).